Reading from the N-terminus, the 88-residue chain is Mitochondrial import inner membrane translocase subunit Tim10 (88 aa).

Positions 29-54 (CHRKCVPPHYKEAELSKGEAVCLDRC) match the Twin CX3C motif motif. Intrachain disulfides connect Cys29–Cys54 and Cys33–Cys50.

The protein belongs to the small Tim family. As to quaternary structure, heterohexamer; composed of 3 copies of TIMM9 and 3 copies of TIMM10/TIM10A, named soluble 70 kDa complex. The complex forms a 6-bladed alpha-propeller structure and associates with the TIMM22 component of the TIM22 complex. Interacts with multi-pass transmembrane proteins in transit.

It localises to the mitochondrion inner membrane. Its function is as follows. Mitochondrial intermembrane chaperone that participates in the import and insertion of multi-pass transmembrane proteins into the mitochondrial inner membrane. May also be required for the transfer of beta-barrel precursors from the TOM complex to the sorting and assembly machinery (SAM complex) of the outer membrane. Acts as a chaperone-like protein that protects the hydrophobic precursors from aggregation and guide them through the mitochondrial intermembrane space. The sequence is that of Mitochondrial import inner membrane translocase subunit Tim10 (timm10) from Danio rerio (Zebrafish).